A 415-amino-acid chain; its full sequence is Dibenzothiophene monooxygenase (415 aa).

Residues Tyr94, 127-132, 157-161, Arg280, 365-366, and Thr387 each bind FMN; these read NASSEN, KHFSS, and IG. A lid loop region spans residues 129-140; it reads SSENNSHILDWK.

Belongs to the DszC flavin monooxygenase family. As to quaternary structure, homotetramer.

It is found in the cytoplasm. It catalyses the reaction dibenzothiophene + 2 FMNH2 + 2 O2 = dibenzothiophene 5,5-dioxide + 2 FMN + 2 H2O + 2 H(+). It carries out the reaction dibenzothiophene + FMNH2 + O2 = dibenzothiophene 5-oxide + FMN + H2O + H(+). The catalysed reaction is dibenzothiophene 5-oxide + FMNH2 + O2 = dibenzothiophene 5,5-dioxide + FMN + H2O + H(+). The protein operates within sulfur metabolism; dibenzothiophene degradation. With respect to regulation, inhibited at high concentrations of FMN or FAD. Functionally, catalyzes the first step of the '4S' desulfurization pathway that removes covalently bound sulfur from dibenzothiophene (DBT) without breaking carbon-carbon bonds. Sulfur dioxygenase which converts DBT to DBT-sulfone (DBTO2 or DBT 5,5-dioxide) probably in a stepwise manner. In addition to FMNH2 can also use FAD (although FAD is less efficient). In Mycolicibacterium goodii (Mycobacterium goodii), this protein is Dibenzothiophene monooxygenase.